We begin with the raw amino-acid sequence, 340 residues long: Outer membrane protein U (340 aa).

The signal sequence occupies residues 1-21; sequence MKKTLIALSVSAAAVATGVNA.

It belongs to the Gram-negative porin family. As to quaternary structure, homotrimer.

It localises to the cell outer membrane. Its function is as follows. Forms pores that allow passive diffusion of small molecules across the outer membrane. In Vibrio vulnificus (strain CMCP6), this protein is Outer membrane protein U (ompU).